A 129-amino-acid polypeptide reads, in one-letter code: Small ribosomal subunit protein uS11 (129 aa).

The protein belongs to the universal ribosomal protein uS11 family. In terms of assembly, part of the 30S ribosomal subunit. Interacts with proteins S7 and S18. Binds to IF-3.

Functionally, located on the platform of the 30S subunit, it bridges several disparate RNA helices of the 16S rRNA. Forms part of the Shine-Dalgarno cleft in the 70S ribosome. This chain is Small ribosomal subunit protein uS11, found in Psychromonas ingrahamii (strain DSM 17664 / CCUG 51855 / 37).